We begin with the raw amino-acid sequence, 229 residues long: Peptidase E (229 aa).

Catalysis depends on charge relay system residues serine 120, aspartate 135, and histidine 157.

The protein belongs to the peptidase S51 family.

The protein localises to the cytoplasm. It catalyses the reaction Dipeptidase E catalyzes the hydrolysis of dipeptides Asp-|-Xaa. It does not act on peptides with N-terminal Glu, Asn or Gln, nor does it cleave isoaspartyl peptides.. Hydrolyzes dipeptides containing N-terminal aspartate residues. May play a role in allowing the cell to use peptide aspartate to spare carbon otherwise required for the synthesis of the aspartate family of amino acids. This Shigella flexneri serotype 5b (strain 8401) protein is Peptidase E.